Consider the following 140-residue polypeptide: MYCTVKEIIRDVLDTDVPDSECVFAVVLTRGDVRHIAQDWNLSDDELETVMQRLDDAFEYGADVSIVHDVVRELMEEKRASRQVTVPAVMLEKVMALAGSEMKRLYAVGSENGGDGDAFVREEREAMDVVLQALDGEHMS.

This is an uncharacterized protein from Escherichia coli O157:H7.